We begin with the raw amino-acid sequence, 823 residues long: Protein FAM83G (823 aa).

Alanine 2 carries the post-translational modification N-acetylalanine. The tract at residues 2–312 is DUF1669; it reads AFSQVQCLDD…LYLMSHSVSL (311 aa). Serine 4 is subject to Phosphoserine. Positions 75–108 are disordered; that stretch reads DPGSEDPRGTGPSQGPEDNGVGDGEEASGADGVP. Phosphoserine is present on residues serine 124, serine 127, and serine 356. The tract at residues 450-823 is disordered; sequence RDTSQASAQH…AQAPRDRKDP (374 aa). The segment covering 452-465 has biased composition (polar residues); that stretch reads TSQASAQHQLWKQS. Over residues 497–508 the composition is skewed to pro residues; sequence DPEPLPPVPKPR. The segment covering 529-543 has biased composition (basic and acidic residues); that stretch reads LPKEEAPQNGTDHRL. Positions 578-587 are enriched in acidic residues; that stretch reads GVEEEDDDDY. Phosphoserine occurs at positions 610, 614, 616, 650, and 666. 2 stretches are compositionally biased toward basic and acidic residues: residues 672–681 and 809–823; these read RGREEADALK and DSKRRAQAPRDRKDP.

The protein belongs to the FAM83 family. In terms of assembly, interacts with SMAD1 (via MH2 domain); in a SMAD4-independent manner. Directly interacts (via DUF1669) with casein kinase isoforms CSNK1A1 and CSNK1A1L. Phosphorylated in vitro by CSNK1A1. In terms of processing, BMP signaling induces the phosphorylation by BMPR1A at Ser-610, Ser-614 and Ser-616. Phosphorylation at Ser-610 is necessary for the activation of SMAD4-independent BMP target genes such as NEDD9 and ASNS.

It localises to the cytoplasm. It is found in the cytosol. The protein resides in the nucleus. Functionally, substrate for type I BMP receptor kinase involved in regulation of some target genes of the BMP signaling pathway. Also regulates the expression of several non-BMP target genes, suggesting a role in other signaling pathways. The sequence is that of Protein FAM83G (FAM83G) from Homo sapiens (Human).